Consider the following 518-residue polypeptide: Bifunctional purine biosynthesis protein PurH (518 aa).

The MGS-like domain occupies 1 to 144; sequence MSKRALISVS…KNHAAVTVVC (144 aa).

The protein belongs to the PurH family.

The catalysed reaction is (6R)-10-formyltetrahydrofolate + 5-amino-1-(5-phospho-beta-D-ribosyl)imidazole-4-carboxamide = 5-formamido-1-(5-phospho-D-ribosyl)imidazole-4-carboxamide + (6S)-5,6,7,8-tetrahydrofolate. It catalyses the reaction IMP + H2O = 5-formamido-1-(5-phospho-D-ribosyl)imidazole-4-carboxamide. It participates in purine metabolism; IMP biosynthesis via de novo pathway; 5-formamido-1-(5-phospho-D-ribosyl)imidazole-4-carboxamide from 5-amino-1-(5-phospho-D-ribosyl)imidazole-4-carboxamide (10-formyl THF route): step 1/1. The protein operates within purine metabolism; IMP biosynthesis via de novo pathway; IMP from 5-formamido-1-(5-phospho-D-ribosyl)imidazole-4-carboxamide: step 1/1. The protein is Bifunctional purine biosynthesis protein PurH of Lactococcus lactis subsp. cremoris (strain MG1363).